A 246-amino-acid polypeptide reads, in one-letter code: tRNA (guanine-N(1)-)-methyltransferase (246 aa).

Residues Gly-113 and 133–138 contribute to the S-adenosyl-L-methionine site; that span reads IGDYVL.

This sequence belongs to the RNA methyltransferase TrmD family. As to quaternary structure, homodimer.

It is found in the cytoplasm. It catalyses the reaction guanosine(37) in tRNA + S-adenosyl-L-methionine = N(1)-methylguanosine(37) in tRNA + S-adenosyl-L-homocysteine + H(+). Specifically methylates guanosine-37 in various tRNAs. This Haemophilus influenzae (strain PittEE) protein is tRNA (guanine-N(1)-)-methyltransferase.